Consider the following 267-residue polypeptide: Hydroxyethylthiazole kinase (267 aa).

Methionine 42 lines the substrate pocket. The ATP site is built by cysteine 118 and threonine 162. A substrate-binding site is contributed by glycine 189.

The protein belongs to the Thz kinase family. Mg(2+) is required as a cofactor.

It carries out the reaction 5-(2-hydroxyethyl)-4-methylthiazole + ATP = 4-methyl-5-(2-phosphooxyethyl)-thiazole + ADP + H(+). It functions in the pathway cofactor biosynthesis; thiamine diphosphate biosynthesis; 4-methyl-5-(2-phosphoethyl)-thiazole from 5-(2-hydroxyethyl)-4-methylthiazole: step 1/1. Its function is as follows. Catalyzes the phosphorylation of the hydroxyl group of 4-methyl-5-beta-hydroxyethylthiazole (THZ). The chain is Hydroxyethylthiazole kinase from Rubrobacter xylanophilus (strain DSM 9941 / JCM 11954 / NBRC 16129 / PRD-1).